The primary structure comprises 177 residues: Nuclear export protein (177 aa).

Short sequence motifs (nuclear export signal) lie at residues 91-100 (LWLPMKSLSL) and 117-127 (MKHQILTRLKL).

In terms of assembly, binds M1 protein. May interact with human nucleoporins and exportin XPO1/CRM1.

The protein localises to the virion. Its subcellular location is the host nucleus. Functionally, mediates the nuclear export of encapsidated genomic RNAs (ribonucleoproteins, RNPs). Acts as an adapter between viral RNPs complexes and the nuclear export machinery of the cell. Possesses no intrinsic RNA-binding activity, but includes a C-terminal M1-binding domain. This domain is believed to allow recognition of RNPs to which the M1 protein is bound. Because the M1 protein is not available in large quantities until the later stages of infection, such an indirect recognition mechanism probably ensures that genomic RNPs are not exported from the nucleus before sufficient quantities of viral mRNA and progeny genomic RNA have been synthesized. Furthermore, the RNPs enters the cytoplasm only when they have associated with the M1 protein that is necessary to guide them to the plasma membrane. May down-regulate viral RNA synthesis when overproduced. The protein is Nuclear export protein (NS) of Influenza C virus (strain C/Great lakes/1167/1954).